The sequence spans 506 residues: 2-isopropylmalate synthase (506 aa).

Residues 4–266 (ILFMDTTLRD…EPSMTLKEIK (263 aa)) enclose the Pyruvate carboxyltransferase domain. Mn(2+)-binding residues include D13, H201, H203, and N237. The interval 390–506 (NITQLQVHFV…KLKSFIQLVK (117 aa)) is regulatory domain.

This sequence belongs to the alpha-IPM synthase/homocitrate synthase family. LeuA type 1 subfamily. Homodimer. It depends on Mn(2+) as a cofactor.

It is found in the cytoplasm. It catalyses the reaction 3-methyl-2-oxobutanoate + acetyl-CoA + H2O = (2S)-2-isopropylmalate + CoA + H(+). It functions in the pathway amino-acid biosynthesis; L-leucine biosynthesis; L-leucine from 3-methyl-2-oxobutanoate: step 1/4. In terms of biological role, catalyzes the condensation of the acetyl group of acetyl-CoA with 3-methyl-2-oxobutanoate (2-ketoisovalerate) to form 3-carboxy-3-hydroxy-4-methylpentanoate (2-isopropylmalate). The chain is 2-isopropylmalate synthase from Bacillus cereus (strain 03BB102).